Reading from the N-terminus, the 258-residue chain is Cytochrome P450 1A2 (258 aa).

This sequence belongs to the cytochrome P450 family. Requires heme as cofactor.

It is found in the endoplasmic reticulum membrane. Its subcellular location is the microsome membrane. It catalyses the reaction an organic molecule + reduced [NADPH--hemoprotein reductase] + O2 = an alcohol + oxidized [NADPH--hemoprotein reductase] + H2O + H(+). Functionally, cytochromes P450 are a group of heme-thiolate monooxygenases. In liver microsomes, this enzyme is involved in an NADPH-dependent electron transport pathway. It oxidizes a variety of structurally unrelated compounds, including steroids, fatty acids, and xenobiotics. In Gallus gallus (Chicken), this protein is Cytochrome P450 1A2 (CYP1A2).